The chain runs to 424 residues: Kynureninase (424 aa).

Residues Leu-106, Thr-107, 134–137, Asp-219, His-222, and Tyr-244 each bind pyridoxal 5'-phosphate; that span reads FPSD. Position 245 is an N6-(pyridoxal phosphate)lysine (Lys-245). Residues Trp-274 and Asn-302 each contribute to the pyridoxal 5'-phosphate site.

This sequence belongs to the kynureninase family. As to quaternary structure, homodimer. Pyridoxal 5'-phosphate is required as a cofactor.

It carries out the reaction L-kynurenine + H2O = anthranilate + L-alanine + H(+). The enzyme catalyses 3-hydroxy-L-kynurenine + H2O = 3-hydroxyanthranilate + L-alanine + H(+). It participates in amino-acid degradation; L-kynurenine degradation; L-alanine and anthranilate from L-kynurenine: step 1/1. The protein operates within cofactor biosynthesis; NAD(+) biosynthesis; quinolinate from L-kynurenine: step 2/3. In terms of biological role, catalyzes the cleavage of L-kynurenine (L-Kyn) and L-3-hydroxykynurenine (L-3OHKyn) into anthranilic acid (AA) and 3-hydroxyanthranilic acid (3-OHAA), respectively. The chain is Kynureninase from Xanthomonas campestris pv. campestris (strain 8004).